A 182-amino-acid chain; its full sequence is NADH-quinone oxidoreductase subunit I (182 aa).

4Fe-4S ferredoxin-type domains lie at 52–82 and 92–121; these read LTRDPDGEERCVACNLCAVACPVGCISLQKA and DFFRINFSRCIFCGLCEEACPTTAIQLTPD. The [4Fe-4S] cluster site is built by Cys-62, Cys-65, Cys-68, Cys-72, Cys-101, Cys-104, Cys-107, and Cys-111.

The protein belongs to the complex I 23 kDa subunit family. In terms of assembly, NDH-1 is composed of 13 different subunits. Subunits NuoA, H, J, K, L, M, N constitute the membrane sector of the complex. Requires [4Fe-4S] cluster as cofactor.

The protein localises to the cell inner membrane. It carries out the reaction a quinone + NADH + 5 H(+)(in) = a quinol + NAD(+) + 4 H(+)(out). NDH-1 shuttles electrons from NADH, via FMN and iron-sulfur (Fe-S) centers, to quinones in the respiratory chain. The immediate electron acceptor for the enzyme in this species is believed to be ubiquinone. Couples the redox reaction to proton translocation (for every two electrons transferred, four hydrogen ions are translocated across the cytoplasmic membrane), and thus conserves the redox energy in a proton gradient. The polypeptide is NADH-quinone oxidoreductase subunit I (Pseudomonas syringae pv. tomato (strain ATCC BAA-871 / DC3000)).